Here is a 264-residue protein sequence, read N- to C-terminus: Undecaprenyl-diphosphatase (264 aa).

Transmembrane regions (helical) follow at residues 42–62, 82–102, 109–129, 146–166, 184–204, 215–235, and 243–263; these read ESLL…LVVF, TQFS…GLLF, LFGG…LLLW, AFII…RSGA, FSFL…LMSG, ILAT…TWMI, and LSWF…FAYA.

Belongs to the UppP family.

Its subcellular location is the cell membrane. It catalyses the reaction di-trans,octa-cis-undecaprenyl diphosphate + H2O = di-trans,octa-cis-undecaprenyl phosphate + phosphate + H(+). Its function is as follows. Catalyzes the dephosphorylation of undecaprenyl diphosphate (UPP). Confers resistance to bacitracin. This Christiangramia forsetii (strain DSM 17595 / CGMCC 1.15422 / KT0803) (Gramella forsetii) protein is Undecaprenyl-diphosphatase.